Reading from the N-terminus, the 682-residue chain is MDAVLACRLRGRGNRVAALRPRPRPGGSAGPSPFALLCAGLSPEPRAGVGSEFPAWFLGGSSQRRNMALLGSRAELEADEDVFEDALETISISSHSDMATSSLHFASCDTQQAPRQRGASTVSSSSSTKVDLKSGLEECAVALNLFLSNKFTDALELLRPWAKESMYHALGYSTIVVLQAVLTFEQQDIQNGISAMKDALQTCQKYRKKYTVVESFSSLLSRGSLEQLSEEEMHAEICYAECLLQKAALTFVQDENMINFIKGGLKIRTSYQIYKECLSILHEIQKNKLQQEFFYEFEGGVKLGSGAFNLMLSLLPARIIRLLEFIGFSGNRELGLLQLREGASGRSMRSALCCLTILAFHTYISLILGTGEVNVAEAERLLAPFLQQFPNGSLVLFYHARIELLKGNLEEAQEVFQKCISVQEEWKQFHHLCYWELMWINVFQQNWMQAYYYSDLLCKESKWSKATYVFLKAAILSMLPEEDVVATNENVVTLFRQVDSLKQRIAGKSIPTEKFAVRKARRYSASLPAPVKLILPALEMMYVWNGFSIVSKRKDLSENLLVTVEKAEAALQSQNFNSFSVDDECLVKLLKGCCLKNLQRPLQAELCYNHVVESEKLLKYDHYLVPFTLFELASLYKSQGEIDKAIKFLETARNNYKDYSLESRLHFRIQAALHLWRKPSSD.

TPR repeat units lie at residues 393 to 426 (SLVLFYHARIELLKGNLEEAQEVFQKCISVQEEW) and 626 to 659 (PFTLFELASLYKSQGEIDKAIKFLETARNNYKDY).

This sequence belongs to the TTC39 family.

In terms of biological role, regulates high density lipoprotein (HDL) cholesterol metabolism by promoting the ubiquitination and degradation of the oxysterols receptors LXR (NR1H2 and NR1H3). This is Tetratricopeptide repeat protein 39B from Homo sapiens (Human).